The following is a 363-amino-acid chain: UV excision repair protein RAD23 homolog A (363 aa).

In terms of domain architecture, Ubiquitin-like spans Met1–Ala81. Residues Ala81–Gly160 form a disordered region. The span at Thr85–Phe103 shows a compositional bias: low complexity. Lys122 participates in a covalent cross-link: Glycyl lysine isopeptide (Lys-Gly) (interchain with G-Cter in ubiquitin). A phosphoserine mark is found at Ser123, Ser128, Ser133, Ser136, and Ser138. Over residues Glu126–Ser147 the composition is skewed to low complexity. The UBA 1 domain maps to Ser161–Gly201. The interval Pro203–Ala227 is disordered. Phosphoserine is present on Ser205. Over residues Val213 to Pro222 the composition is skewed to polar residues. A phosphoserine mark is found at Ser295 and Ser357. The region spanning Pro318–Gln358 is the UBA 2 domain. Residues Gln319–Glu363 form an HIV-1 vpr binding region.

It belongs to the RAD23 family. Interacts with XPC; the interaction is suggesting the existence of a functional equivalent variant XPC complex. Interacts with PSMD4 and PSMC5. Interacts with ATXN3. Interacts with UBQLN2. As to quaternary structure, (Microbial infection) Interacts with HIV-1 Vpr.

Its subcellular location is the nucleus. Its function is as follows. Multiubiquitin chain receptor involved in modulation of proteasomal degradation. Binds to 'Lys-48'-linked polyubiquitin chains in a length-dependent manner and with a lower affinity to 'Lys-63'-linked polyubiquitin chains. Proposed to be capable to bind simultaneously to the 26S proteasome and to polyubiquitinated substrates and to deliver ubiquitinated proteins to the proteasome. Functionally, involved in nucleotide excision repair and is thought to be functional equivalent for RAD23B in global genome nucleotide excision repair (GG-NER) by association with XPC. In vitro, the XPC:RAD23A dimer has NER activity. Can stabilize XPC. In terms of biological role, (Microbial infection) Involved in Vpr-dependent replication of HIV-1 in non-proliferating cells and primary macrophages. Required for the association of HIV-1 Vpr with the host proteasome. The sequence is that of UV excision repair protein RAD23 homolog A (RAD23A) from Homo sapiens (Human).